Consider the following 571-residue polypeptide: Proline--tRNA ligase (571 aa).

This sequence belongs to the class-II aminoacyl-tRNA synthetase family. ProS type 1 subfamily. Homodimer.

Its subcellular location is the cytoplasm. It carries out the reaction tRNA(Pro) + L-proline + ATP = L-prolyl-tRNA(Pro) + AMP + diphosphate. Its function is as follows. Catalyzes the attachment of proline to tRNA(Pro) in a two-step reaction: proline is first activated by ATP to form Pro-AMP and then transferred to the acceptor end of tRNA(Pro). As ProRS can inadvertently accommodate and process non-cognate amino acids such as alanine and cysteine, to avoid such errors it has two additional distinct editing activities against alanine. One activity is designated as 'pretransfer' editing and involves the tRNA(Pro)-independent hydrolysis of activated Ala-AMP. The other activity is designated 'posttransfer' editing and involves deacylation of mischarged Ala-tRNA(Pro). The misacylated Cys-tRNA(Pro) is not edited by ProRS. The sequence is that of Proline--tRNA ligase from Shewanella baltica (strain OS155 / ATCC BAA-1091).